We begin with the raw amino-acid sequence, 360 residues long: Peptide chain release factor 1 (360 aa).

Gln-235 is modified (N5-methylglutamine). Residues 281 to 310 (AERQRQDAAQAESRRLQVGSGDRSQRIRTY) are disordered.

It belongs to the prokaryotic/mitochondrial release factor family. Methylated by PrmC. Methylation increases the termination efficiency of RF1.

The protein resides in the cytoplasm. Peptide chain release factor 1 directs the termination of translation in response to the peptide chain termination codons UAG and UAA. In Stenotrophomonas maltophilia (strain K279a), this protein is Peptide chain release factor 1.